The sequence spans 638 residues: Zinc finger protein 143 (638 aa).

Met-1 bears the N-acetylmethionine mark. Lys-213 participates in a covalent cross-link: Glycyl lysine isopeptide (Lys-Gly) (interchain with G-Cter in SUMO2). 4 consecutive C2H2-type zinc fingers follow at residues 237-261 (FRCK…ERSH), 267-291 (YQCE…FRTH), 297-321 (YRCS…IRTH), and 327-351 (FKCP…IRTH). Thr-352 is subject to Phosphothreonine. 3 C2H2-type zinc fingers span residues 357–381 (YYCT…VRIH), 387–411 (YVCT…HVVH), and 417–440 (YNCN…RTAH). A Glycyl lysine isopeptide (Lys-Gly) (interchain with G-Cter in SUMO2) cross-link involves residue Lys-406.

Belongs to the GLI C2H2-type zinc-finger protein family. Interacts with CHD8. Forms a complex with HCFC1 and ZNF143.

It is found in the nucleus. In terms of biological role, transcriptional activator. Activates the gene for selenocysteine tRNA (tRNAsec). Binds to the SPH motif of small nuclear RNA (snRNA) gene promoters. Participates in efficient U6 RNA polymerase III transcription via its interaction with CHD8. In complex with HCFC1 and ZNF143, regulates the expression of several genes, including AP2S1, ESCO2, OPHN1, RBL1, UBXN8 and ZNF32. The sequence is that of Zinc finger protein 143 (Znf143) from Mus musculus (Mouse).